The sequence spans 874 residues: Protein Son (874 aa).

3 disordered regions span residues 1-45 (MTEN…ERPD), 68-98 (RRSN…NIKP), and 120-368 (ELLD…SRDL). Over residues 12–24 (ETPQVAGSQTNPP) the composition is skewed to polar residues. Positions 70–89 (SNSNELGNNDESGESESSAS) are enriched in low complexity. Basic residues-rich tracts occupy residues 128 to 147 (KKKK…KKKT) and 162 to 175 (KHKH…HKDI). Composition is skewed to basic and acidic residues over residues 176 to 219 (RVKD…KDKF) and 226 to 277 (SEKE…ERVR). Residues 705–751 (TGGMGMALLQKMGWKPGEGLGRCKTGSLQPLLLDVKLDKRGLVSRDD) enclose the G-patch domain. In terms of domain architecture, DRBM spans 800-870 (HPVCVLNELT…AALCLRSLGI (71 aa)).

As to expression, expressed in ovarian nurse cells (at protein level).

It is found in the nucleus. Its function is as follows. RNA-binding protein that protects nascent transcripts containing intronic transposable sequences, known as INE-1, from being degraded by DIP1. Modulates DIP1 activity by repressing its sumoylation levels. This ensures that intronic sequences will be degradated only after splicing. In the ovaries, regulates germline stem cells (GSCs) self-renewal by repressing the expression of the GSC differentiation-promoting factor Rga. The polypeptide is Protein Son (Drosophila melanogaster (Fruit fly)).